Here is a 456-residue protein sequence, read N- to C-terminus: Methylenetetrahydrofolate--tRNA-(uracil-5-)-methyltransferase TrmFO (456 aa).

9–14 (GGGMAG) is a binding site for FAD.

This sequence belongs to the MnmG family. TrmFO subfamily. Requires FAD as cofactor.

The protein resides in the cytoplasm. It catalyses the reaction uridine(54) in tRNA + (6R)-5,10-methylene-5,6,7,8-tetrahydrofolate + NADH + H(+) = 5-methyluridine(54) in tRNA + (6S)-5,6,7,8-tetrahydrofolate + NAD(+). The catalysed reaction is uridine(54) in tRNA + (6R)-5,10-methylene-5,6,7,8-tetrahydrofolate + NADPH + H(+) = 5-methyluridine(54) in tRNA + (6S)-5,6,7,8-tetrahydrofolate + NADP(+). Catalyzes the folate-dependent formation of 5-methyl-uridine at position 54 (M-5-U54) in all tRNAs. The sequence is that of Methylenetetrahydrofolate--tRNA-(uracil-5-)-methyltransferase TrmFO from Novosphingobium aromaticivorans (strain ATCC 700278 / DSM 12444 / CCUG 56034 / CIP 105152 / NBRC 16084 / F199).